Consider the following 665-residue polypeptide: Secreted LysM effector Lys3 (665 aa).

A signal peptide spans 1 to 19 (MLWLTVSLTGFALLGVVAA). N-linked (GlcNAc...) asparagine glycans are attached at residues asparagine 43 and asparagine 153. LysM domains follow at residues 166–211 (RTYT…TLCL), 216–264 (TLRK…YICI), and 303–349 (KWYV…AYCV). Asparagine 234 carries an N-linked (GlcNAc...) asparagine glycan. Asparagine 398 is a glycosylation site (N-linked (GlcNAc...) asparagine). Residues 409–454 (SWSDAAKLNSCSFIAHINGVTVSQLLQWNPSLSKDSCSLSRELYYC) form the LysM 4 domain. Asparagine 531 carries N-linked (GlcNAc...) asparagine glycosylation. Positions 585–610 (SSVSMTNSAPATATSTGGPPAPTQDG) are disordered. The segment covering 592–602 (SAPATATSTGG) has biased composition (low complexity). N-linked (GlcNAc...) asparagine glycosylation is present at asparagine 614. In terms of domain architecture, LysM 5 spans 617 to 663 (KWHVVESGDGCWAIYTKYGITSDQLFEWNTKISKDCSNIWLGYAVCV).

It belongs to the secreted LysM effector family.

Its function is as follows. Might have a role in sequestration of chitin oligosaccharides (breakdown products of fungal cell walls that are released during invasion and act as triggers of host immunity) to dampen host defense. In Pochonia chlamydosporia (strain 123) (Metacordyceps chlamydosporia), this protein is Secreted LysM effector Lys3.